A 131-amino-acid polypeptide reads, in one-letter code: Aspartate 1-decarboxylase (131 aa).

Ser-25 (schiff-base intermediate with substrate; via pyruvic acid) is an active-site residue. Residue Ser-25 is modified to Pyruvic acid (Ser). Residue Thr-57 participates in substrate binding. Tyr-58 functions as the Proton donor in the catalytic mechanism. Residue 73–75 participates in substrate binding; the sequence is GAA. The segment at 112–131 is disordered; that stretch reads NVPTTQKSENPGQGSLRNAI. Positions 113-131 are enriched in polar residues; sequence VPTTQKSENPGQGSLRNAI.

Belongs to the PanD family. In terms of assembly, heterooctamer of four alpha and four beta subunits. It depends on pyruvate as a cofactor. In terms of processing, is synthesized initially as an inactive proenzyme, which is activated by self-cleavage at a specific serine bond to produce a beta-subunit with a hydroxyl group at its C-terminus and an alpha-subunit with a pyruvoyl group at its N-terminus.

Its subcellular location is the cytoplasm. It catalyses the reaction L-aspartate + H(+) = beta-alanine + CO2. Its pathway is cofactor biosynthesis; (R)-pantothenate biosynthesis; beta-alanine from L-aspartate: step 1/1. Catalyzes the pyruvoyl-dependent decarboxylation of aspartate to produce beta-alanine. In Syntrophotalea carbinolica (strain DSM 2380 / NBRC 103641 / GraBd1) (Pelobacter carbinolicus), this protein is Aspartate 1-decarboxylase.